Consider the following 1244-residue polypeptide: ATP-dependent helicase/nuclease subunit A (1244 aa).

In terms of domain architecture, UvrD-like helicase ATP-binding spans 4–477 (TKWTEEQLSA…IQLYKNFRSR (474 aa)). Position 25 to 32 (25 to 32 (AAAGSGKT)) interacts with ATP. The 295-residue stretch at 517–811 (KNVDDIIGGP…RIMSIHKSKG (295 aa)) folds into the UvrD-like helicase C-terminal domain.

It belongs to the helicase family. AddA subfamily. Heterodimer of AddA and AddB/RexB. Mg(2+) serves as cofactor.

It carries out the reaction Couples ATP hydrolysis with the unwinding of duplex DNA by translocating in the 3'-5' direction.. It catalyses the reaction ATP + H2O = ADP + phosphate + H(+). In terms of biological role, the heterodimer acts as both an ATP-dependent DNA helicase and an ATP-dependent, dual-direction single-stranded exonuclease. Recognizes the chi site generating a DNA molecule suitable for the initiation of homologous recombination. The AddA nuclease domain is required for chi fragment generation; this subunit has the helicase and 3' -&gt; 5' nuclease activities. The protein is ATP-dependent helicase/nuclease subunit A of Clostridium botulinum (strain Alaska E43 / Type E3).